A 317-amino-acid chain; its full sequence is Malate dehydrogenase (317 aa).

Residues 15 to 20 and aspartate 39 each bind NAD(+); that span reads GSGNIG. The substrate site is built by arginine 88 and arginine 94. Residues asparagine 101 and 124 to 126 contribute to the NAD(+) site; that span reads VTN. Asparagine 126 and arginine 157 together coordinate substrate. Residue histidine 181 is the Proton acceptor of the active site.

The protein belongs to the LDH/MDH superfamily. MDH type 3 family.

The catalysed reaction is (S)-malate + NAD(+) = oxaloacetate + NADH + H(+). Catalyzes the reversible oxidation of malate to oxaloacetate. The chain is Malate dehydrogenase from Ehrlichia ruminantium (strain Gardel).